The sequence spans 363 residues: Small ribosomal subunit biogenesis GTPase RsgA (363 aa).

The region spanning 112–268 (HQQVIAANID…LIDTPGMREL (157 aa)) is the CP-type G domain. GTP is bound by residues 157–160 (TKAD) and 210–218 (GSSGAGKST). The Zn(2+) site is built by cysteine 291, cysteine 296, histidine 298, and cysteine 304. Positions 340–363 (RVAQNNRGKGSGKRPASVDRPGRR) are disordered.

It belongs to the TRAFAC class YlqF/YawG GTPase family. RsgA subfamily. As to quaternary structure, monomer. Associates with 30S ribosomal subunit, binds 16S rRNA. Zn(2+) is required as a cofactor.

The protein localises to the cytoplasm. In terms of biological role, one of several proteins that assist in the late maturation steps of the functional core of the 30S ribosomal subunit. Helps release RbfA from mature subunits. May play a role in the assembly of ribosomal proteins into the subunit. Circularly permuted GTPase that catalyzes slow GTP hydrolysis, GTPase activity is stimulated by the 30S ribosomal subunit. The protein is Small ribosomal subunit biogenesis GTPase RsgA of Xanthomonas euvesicatoria pv. vesicatoria (strain 85-10) (Xanthomonas campestris pv. vesicatoria).